A 60-amino-acid chain; its full sequence is Large ribosomal subunit protein bL32 (60 aa).

Residues 1–60 (MAVQQNKKSPSKRGMHRSHDFLVNPSTAIEPTTGETHLRHHISPNGFYRGRKVLKTKADE) form a disordered region. The segment covering 24–35 (NPSTAIEPTTGE) has biased composition (polar residues). A compositionally biased stretch (basic residues) spans 49-60 (RGRKVLKTKADE).

It belongs to the bacterial ribosomal protein bL32 family.

The chain is Large ribosomal subunit protein bL32 from Bordetella petrii (strain ATCC BAA-461 / DSM 12804 / CCUG 43448).